Reading from the N-terminus, the 472-residue chain is MQNQGQDKYQQAFADLEPLSSTDGSFLGSSLQAQQQREHMRTKVLQDLDKVNLRLKSAKTKVSVRESNGSLQLRATLPIKPGDKDTNGTGRKQYNLSLNIPANLDGLKTAEEEAYELGKLIARKTFEWNDKYLGKEATKKDSQTIGDLLEKFAEEYFKTHKRTTKSEHTFFYYFSRTQRYTNSKDLATAENLINSIEQIDKEWARYNAARAISAFCITFNIEIDLSQYSKMPDRNSRNIPTDAEILSGITKFEDYLVTRGNQVNEDVKDSWQLWRWTYGMLAVFGLRPREIFINPNIDWWLSKENIDLTWKVDKECKTGERQALPLHKEWIDEFDLRNPKYLEMLATAISKKDKTNHAEITALTQRISWWFRKVELDFKPYDLRHAWAIRAHILGIPIKAAADNLGHSMQVHTQTYQRWFSLDMRKLAINQALTKRNEFEVIREENAKLQIENERLRMEIEKLKMEIAYKNS.

The Tyr recombinase domain occupies 244–429; that stretch reads EILSGITKFE…FSLDMRKLAI (186 aa). Residues Arg-287, Lys-317, Arg-384, and His-407 contribute to the active site. Tyr-416 serves as the catalytic O-(3'-phospho-DNA)-tyrosine intermediate.

It belongs to the XisA/XisC recombinase family.

In terms of biological role, essential for DNA excision. Site specific recombinase necessary for the excision of the 11 kb nifD element during heterocyst differentiation. This is Excisase A (xisA) from Nostoc sp. (strain PCC 7120 / SAG 25.82 / UTEX 2576).